A 283-amino-acid polypeptide reads, in one-letter code: Probable protein phosphatase 2C 58 (283 aa).

A PPM-type phosphatase domain is found at 35-282; the sequence is THGFHCVKGK…DDISCIVVKF (248 aa). D72, G73, D234, and D273 together coordinate Mn(2+).

The protein belongs to the PP2C family. The cofactor is Mg(2+). Mn(2+) is required as a cofactor.

The enzyme catalyses O-phospho-L-seryl-[protein] + H2O = L-seryl-[protein] + phosphate. It carries out the reaction O-phospho-L-threonyl-[protein] + H2O = L-threonyl-[protein] + phosphate. The chain is Probable protein phosphatase 2C 58 from Arabidopsis thaliana (Mouse-ear cress).